A 152-amino-acid polypeptide reads, in one-letter code: Large ribosomal subunit protein bL9 (152 aa).

The protein belongs to the bacterial ribosomal protein bL9 family.

Its function is as follows. Binds to the 23S rRNA. In Mycoplasmopsis synoviae (strain 53) (Mycoplasma synoviae), this protein is Large ribosomal subunit protein bL9.